The primary structure comprises 267 residues: Hydroxyethylthiazole kinase (267 aa).

Methionine 46 provides a ligand contact to substrate. Positions 122 and 168 each coordinate ATP. Glycine 195 is a binding site for substrate.

The protein belongs to the Thz kinase family. Mg(2+) serves as cofactor.

The catalysed reaction is 5-(2-hydroxyethyl)-4-methylthiazole + ATP = 4-methyl-5-(2-phosphooxyethyl)-thiazole + ADP + H(+). It participates in cofactor biosynthesis; thiamine diphosphate biosynthesis; 4-methyl-5-(2-phosphoethyl)-thiazole from 5-(2-hydroxyethyl)-4-methylthiazole: step 1/1. Catalyzes the phosphorylation of the hydroxyl group of 4-methyl-5-beta-hydroxyethylthiazole (THZ). The protein is Hydroxyethylthiazole kinase of Nitratidesulfovibrio vulgaris (strain ATCC 29579 / DSM 644 / CCUG 34227 / NCIMB 8303 / VKM B-1760 / Hildenborough) (Desulfovibrio vulgaris).